A 676-amino-acid chain; its full sequence is MSTNILQHVKQLLHNRDVFSFFHNKTGNLNYLDNTTQKPEVFVSPNSTIVSAPTLDSFQALMEKGNFTTLQLAKVGIRMFFSYSVSKYAVLCFSTAIILNRLTVMSSLRSNSTNIRLPLWSKTLLHLVATLSLVKALLQILSQFGLMHELHVSDTDFYALSVYLFVALSDCIEIFISSTTNVPSLICSDFSIWGLSLNLYIISKMPAGQQHIGDNVELLGAVFHRLVIHLVELFHIRAYRLCGEVILNAGFFTAFVTRTYLNGLDFINICLIHNYFPGFFYISTILLASIGIFLKALFTSNPFRSLYSRYKNLEKWWRSNNYNGEEEFNEIALSLCLLLTSNDYKIFKKSDNVKSVDEVAAFSNSYVVSGHLNQLQSTPEDLLSRKEMTTDSQLPGFARTYLGLFELVRTIILTYSRLLKNLLWSKNFESSIDKKPRVGKRKKRDLNKYVTEKNYKKFLYKPDVKELNIESDLRSLELLLPEDDSSKDYFPPRKIDESVSDEEFDSDMESQLIIDEEKELTHLSSNAVDSDDLEEIAWNISMWSILNYEMDVHNKVNGPLTRSQYGKRNPQGVLVDVVIERLLHHTNSRYMYKRLNMKDDDKLEFKFDFAFDSCDEVEEMDLSCLICKVNKRNIVTWPCRCLALCDDCRISLGYKGFATCVSCDSEVKGYSKLNIV.

The Perinuclear space portion of the chain corresponds to 1–78 (MSTNILQHVK…TLQLAKVGIR (78 aa)). Residues asparagine 24, asparagine 34, asparagine 46, and asparagine 66 are each glycosylated (N-linked (GlcNAc...) asparagine). Residues 79 to 99 (MFFSYSVSKYAVLCFSTAIIL) form a helical membrane-spanning segment. The Nuclear portion of the chain corresponds to 100 to 126 (NRLTVMSSLRSNSTNIRLPLWSKTLLH). Residues 127-147 (LVATLSLVKALLQILSQFGLM) traverse the membrane as a helical segment. Residues 148–156 (HELHVSDTD) lie on the Perinuclear space side of the membrane. A helical transmembrane segment spans residues 157-177 (FYALSVYLFVALSDCIEIFIS). Residues 178 to 181 (STTN) lie on the Nuclear side of the membrane. The chain crosses the membrane as a helical span at residues 182-202 (VPSLICSDFSIWGLSLNLYII). The Perinuclear space segment spans residues 203-277 (SKMPAGQQHI…NICLIHNYFP (75 aa)). A helical transmembrane segment spans residues 278-298 (GFFYISTILLASIGIFLKALF). The Nuclear segment spans residues 299 to 676 (TSNPFRSLYS…VKGYSKLNIV (378 aa)). The RING-type; atypical zinc-finger motif lies at 624–664 (CLICKVNKRNIVTWPCRCLALCDDCRISLGYKGFATCVSCD).

Component of the Asi complex, which contains ASI1, ASI2 and ASI3. Interacts directly with ASI1.

The protein localises to the nucleus inner membrane. It carries out the reaction S-ubiquitinyl-[E2 ubiquitin-conjugating enzyme]-L-cysteine + [acceptor protein]-L-lysine = [E2 ubiquitin-conjugating enzyme]-L-cysteine + N(6)-ubiquitinyl-[acceptor protein]-L-lysine.. Functionally, part of the nuclear inner membrane (INM)-specific branch of the ER-associated degradation (ERAD) pathway, required for the elimination of misfolded proteins in the INM, a specialized ER subdomain. Required for ERG11 degradation. Negative regulator of SPS-sensor signaling. Together with ASI2 and ASI3, prevents the unprocessed precursor forms of STP1 and STP2 that escape cytoplasmic anchoring from inducing SPS-sensor-regulated genes in the absence of inducing signals. Controls amino acid permease (AAP) gene expression in response to amino acid availability, a process mediated by the transcription factors STP1 and STP1. The protein is Probable ERAD-associated E3 ubiquitin-protein ligase ASI1 (ASI3) of Saccharomyces cerevisiae (strain ATCC 204508 / S288c) (Baker's yeast).